The primary structure comprises 447 residues: Voltage-gated purine nucleotide uniporter SLC17A9 (447 aa).

Residues 1 to 26 (MPSQRSSLMQPIPEETRKTPSAAAED) form a disordered region. Residues 14-26 (EETRKTPSAAAED) show a composition bias toward basic and acidic residues. 11 consecutive transmembrane segments (helical) span residues 36 to 58 (LWTG…MPVC), 74 to 94 (GIVL…GGHL), 103 to 123 (VILL…LLAH), 129 to 149 (LAFV…YFPA), 169 to 189 (TVGA…SVLL), 197 to 217 (VFYF…KYLL), 252 to 272 (VWAV…LLSW), 287 to 307 (WVFN…SGFI), 327 to 347 (VMGL…TSFL), 380 to 400 (GFLF…GVCL), and 413 to 433 (CVFH…LVFG).

The protein belongs to the major facilitator superfamily. Sodium/anion cotransporter family.

The protein localises to the cytoplasmic vesicle. The protein resides in the secretory vesicle. It localises to the chromaffin granule membrane. Its subcellular location is the secretory vesicle membrane. It is found in the lysosome membrane. The enzyme catalyses ATP(in) = ATP(out). It catalyses the reaction ADP(in) = ADP(out). It carries out the reaction GTP(in) = GTP(out). Its activity is regulated as follows. Activity is chloride-dependent. In terms of biological role, voltage-gated ATP nucleotide uniporter that can also transport the purine nucleotides ADP and GTP. Uses the membrane potential as the driving force to control ATP accumulation in lysosomes and secretory vesicles. By controlling ATP storage in lysosomes, regulates ATP-dependent proteins of these organelles. Also indirectly regulates the exocytosis of ATP through its import into lysosomes in astrocytes and secretory vesicles such as adrenal chromaffin granules, mucin granules and synaptic vesicles. This is Voltage-gated purine nucleotide uniporter SLC17A9 from Rattus norvegicus (Rat).